Reading from the N-terminus, the 861-residue chain is Probable linoleate 9S-lipoxygenase 3 (861 aa).

The PLAT domain occupies 33–160; sequence FTDLASSLTG…NYKSDRIFFA (128 aa). The Lipoxygenase domain occupies 163-861; that stretch reads PYLPSDTPEL…GKGIPNSVSI (699 aa). Positions 220–247 are disordered; that stretch reads TLGGSAEYPYPRRGRTGRPPTRTDPKSE. Fe cation is bound by residues histidine 522, histidine 527, histidine 713, asparagine 717, and isoleucine 861.

Belongs to the lipoxygenase family. As to quaternary structure, monomer. Fe cation serves as cofactor. As to expression, expressed in tubers and roots. Not detected in leaves, flowers, stems, shoot tips, or axillary buds.

It localises to the cytoplasm. It carries out the reaction (9Z,12Z)-octadecadienoate + O2 = (9S)-hydroperoxy-(10E,12Z)-octadecadienoate. It functions in the pathway lipid metabolism; oxylipin biosynthesis. Plant lipoxygenases may be involved in a number of diverse aspects of plant physiology including growth and development, pest resistance, and senescence or responses to wounding. Catalyzes the hydroperoxidation of lipids containing a cis,cis-1,4-pentadiene structure. In Solanum tuberosum (Potato), this protein is Probable linoleate 9S-lipoxygenase 3 (LOX1.3).